The sequence spans 216 residues: GTP cyclohydrolase 1 (216 aa).

The Zn(2+) site is built by C109, H112, and C180.

Belongs to the GTP cyclohydrolase I family. As to quaternary structure, toroid-shaped homodecamer, composed of two pentamers of five dimers.

The enzyme catalyses GTP + H2O = 7,8-dihydroneopterin 3'-triphosphate + formate + H(+). It participates in cofactor biosynthesis; 7,8-dihydroneopterin triphosphate biosynthesis; 7,8-dihydroneopterin triphosphate from GTP: step 1/1. This chain is GTP cyclohydrolase 1, found in Wigglesworthia glossinidia brevipalpis.